The primary structure comprises 187 residues: Probable chemoreceptor glutamine deamidase CheD (187 aa).

The tract at residues 164–187 (APQDVRRPTPPPMPAVASGDVDLF) is disordered.

This sequence belongs to the CheD family.

The enzyme catalyses L-glutaminyl-[protein] + H2O = L-glutamyl-[protein] + NH4(+). Functionally, probably deamidates glutamine residues to glutamate on methyl-accepting chemotaxis receptors (MCPs), playing an important role in chemotaxis. This is Probable chemoreceptor glutamine deamidase CheD from Caulobacter vibrioides (strain ATCC 19089 / CIP 103742 / CB 15) (Caulobacter crescentus).